The chain runs to 638 residues: 1-deoxy-D-xylulose-5-phosphate synthase (638 aa).

Thiamine diphosphate-binding positions include histidine 79 and 120–122; that span reads AHS. Aspartate 151 serves as a coordination point for Mg(2+). Thiamine diphosphate-binding positions include 152 to 153, asparagine 180, tyrosine 289, and glutamate 371; that span reads GA. Asparagine 180 contributes to the Mg(2+) binding site.

The protein belongs to the transketolase family. DXPS subfamily. Homodimer. The cofactor is Mg(2+). Requires thiamine diphosphate as cofactor.

It catalyses the reaction D-glyceraldehyde 3-phosphate + pyruvate + H(+) = 1-deoxy-D-xylulose 5-phosphate + CO2. Its pathway is metabolic intermediate biosynthesis; 1-deoxy-D-xylulose 5-phosphate biosynthesis; 1-deoxy-D-xylulose 5-phosphate from D-glyceraldehyde 3-phosphate and pyruvate: step 1/1. Its function is as follows. Catalyzes the acyloin condensation reaction between C atoms 2 and 3 of pyruvate and glyceraldehyde 3-phosphate to yield 1-deoxy-D-xylulose-5-phosphate (DXP). The chain is 1-deoxy-D-xylulose-5-phosphate synthase from Rhizobium etli (strain ATCC 51251 / DSM 11541 / JCM 21823 / NBRC 15573 / CFN 42).